The sequence spans 584 residues: Aspartate--tRNA(Asp/Asn) ligase (584 aa).

E177 serves as a coordination point for L-aspartate. Residues 201–204 (QLFK) are aspartate. R223 contacts L-aspartate. Residues 223 to 225 (RDE) and Q232 each bind ATP. L-aspartate is bound at residue H447. E481 is a binding site for ATP. Position 488 (R488) interacts with L-aspartate. Residue 533 to 536 (GLDR) participates in ATP binding.

The protein belongs to the class-II aminoacyl-tRNA synthetase family. Type 1 subfamily. As to quaternary structure, homodimer.

It localises to the cytoplasm. The enzyme catalyses tRNA(Asx) + L-aspartate + ATP = L-aspartyl-tRNA(Asx) + AMP + diphosphate. Aspartyl-tRNA synthetase with relaxed tRNA specificity since it is able to aspartylate not only its cognate tRNA(Asp) but also tRNA(Asn). Reaction proceeds in two steps: L-aspartate is first activated by ATP to form Asp-AMP and then transferred to the acceptor end of tRNA(Asp/Asn). This chain is Aspartate--tRNA(Asp/Asn) ligase, found in Chlamydia abortus (strain DSM 27085 / S26/3) (Chlamydophila abortus).